A 396-amino-acid polypeptide reads, in one-letter code: Proteasome-activating nucleotidase (396 aa).

Positions 16–57 (VTYLKRRIRQLELQVRMLEADKERLERELSRLRSEMSRLRQP) form a coiled coil. Residues 181 to 186 (GCGKTL) and His-320 contribute to the ATP site. The interval 394–396 (IYG) is docks into pockets in the proteasome alpha-ring to cause gate opening.

This sequence belongs to the AAA ATPase family. Homohexamer. The hexameric complex has a two-ring architecture resembling a top hat that caps the 20S proteasome core at one or both ends. Upon ATP-binding, the C-terminus of PAN interacts with the alpha-rings of the proteasome core by binding to the intersubunit pockets.

It localises to the cytoplasm. Its function is as follows. ATPase which is responsible for recognizing, binding, unfolding and translocation of substrate proteins into the archaeal 20S proteasome core particle. Is essential for opening the gate of the 20S proteasome via an interaction with its C-terminus, thereby allowing substrate entry and access to the site of proteolysis. Thus, the C-termini of the proteasomal ATPase function like a 'key in a lock' to induce gate opening and therefore regulate proteolysis. Unfolding activity requires energy from ATP hydrolysis, whereas ATP binding alone promotes ATPase-20S proteasome association which triggers gate opening, and supports translocation of unfolded substrates. In Pyrococcus furiosus (strain ATCC 43587 / DSM 3638 / JCM 8422 / Vc1), this protein is Proteasome-activating nucleotidase.